The primary structure comprises 260 residues: Exosome complex component Rrp4 (260 aa).

Residues 59 to 128 (NDVVIGIVIV…SSMKVELALR (70 aa)) enclose the S1 motif domain. Positions 136-194 (KTGQIIKVESVKVPRVIGHGGSMISMLKKETNCSIFVGQNGRIWIDGKDEDIELLSKAL) constitute a KH domain.

The protein belongs to the RRP4 family. As to quaternary structure, component of the archaeal exosome complex. Forms a trimer of Rrp4 and/or Csl4 subunits. The trimer associates with a hexameric ring-like arrangement composed of 3 Rrp41-Rrp42 heterodimers.

The protein resides in the cytoplasm. Non-catalytic component of the exosome, which is a complex involved in RNA degradation. Increases the RNA binding and the efficiency of RNA degradation. Confers strong poly(A) specificity to the exosome. The polypeptide is Exosome complex component Rrp4 (Methanosarcina acetivorans (strain ATCC 35395 / DSM 2834 / JCM 12185 / C2A)).